The primary structure comprises 690 residues: Ras guanyl-releasing protein 3 (690 aa).

Residues 3-125 (SSGLGKAATL…SLIDISSIPS (123 aa)) enclose the N-terminal Ras-GEF domain. In terms of domain architecture, Ras-GEF spans 152-383 (EPIELAEHLT…YKLSLVLEPR (232 aa)). EF-hand domains follow at residues 420 to 455 (HIRK…FPFL) and 458 to 484 (FCVL…AKSQ). Ca(2+)-binding residues include Asp-433, Asp-435, Asp-437, Tyr-439, Asp-444, Asp-462, Asp-464, Asp-466, and Glu-473. A Phorbol-ester/DAG-type zinc finger spans residues 494–544 (IHNFQEMTYLKPTFCEHCAGFLWGIIKQGYKCKDCGANCHKQCKDLLVLAC). Residues 667–690 (VDRGTEFELDQDEGEETRQDGEDG) form a disordered region.

It belongs to the RASGRP family.

In terms of biological role, guanine nucleotide exchange factor (GEF) for Ras and Rap1. In Homo sapiens (Human), this protein is Ras guanyl-releasing protein 3 (RASGRP3).